A 379-amino-acid chain; its full sequence is Salicylate/benzoate carboxyl methyltransferase (379 aa).

Tyr40 is an S-adenosyl-L-homocysteine binding site. Gln47 provides a ligand contact to salicylate. The S-adenosyl-L-homocysteine site is built by Cys82, Asn87, Asp119, Leu120, Ser155, and Phe156. Positions 176 and 177 each coordinate salicylate. Mg(2+) is bound by residues Asn188, Asp275, Phe277, and Asn278.

The protein belongs to the methyltransferase superfamily. Type-7 methyltransferase family. SABATH subfamily. In terms of assembly, homodimer. The cofactor is Mg(2+). In terms of tissue distribution, expressed in flowers and at lower levels in leaves and stems. Hardly detected in roots and siliques. Expressed in the sepals and the leaf trichomes and hydathodes.

It carries out the reaction benzoate + S-adenosyl-L-methionine = methyl benzoate + S-adenosyl-L-homocysteine. The enzyme catalyses salicylate + S-adenosyl-L-methionine = methyl salicylate + S-adenosyl-L-homocysteine. Methyltransferase involved in the biosynthesis of methylsalicylate in response to stresses. Utilizes salicylic acid (SA) more efficiently than benzoic acid (BA). Can also use anthranilic acid and m-hydroxybenzoic acid as substrate. The chain is Salicylate/benzoate carboxyl methyltransferase (BSMT1) from Arabidopsis thaliana (Mouse-ear cress).